A 108-amino-acid polypeptide reads, in one-letter code: Protein SMALL AUXIN UP-REGULATED RNA 8 (108 aa).

This sequence belongs to the ARG7 family. As to expression, expressed in seedlings, leaves and flowers.

The protein resides in the cell membrane. Functionally, provide a mechanistic link between auxin and plasma membrane H(+)-ATPases (PM H(+)-ATPases, e.g. AHA1 and AHA2), and triggers PM H(+)-ATPases activity by promoting phosphorylation of their C-terminal autoinhibitory domain as a result of PP2C-D subfamily of type 2C phosphatases inhibition, thus leading to the acidification of the apoplast and the facilitation of solutes and water uptake to drive cell expansion. Triggers plant growth probably by promoting cell elongation. Regulates branch angles and bending. In Arabidopsis thaliana (Mouse-ear cress), this protein is Protein SMALL AUXIN UP-REGULATED RNA 8.